The sequence spans 325 residues: DNA-directed RNA polymerase subunit alpha (325 aa).

Residues 1-231 (MQTSLLKPKI…DQLSVFAALE (231 aa)) are alpha N-terminal domain (alpha-NTD). Residues 246–325 (IDPILLRPVD…ENWPPAGLDK (80 aa)) form an alpha C-terminal domain (alpha-CTD) region.

The protein belongs to the RNA polymerase alpha chain family. As to quaternary structure, homodimer. The RNAP catalytic core consists of 2 alpha, 1 beta, 1 beta' and 1 omega subunit. When a sigma factor is associated with the core the holoenzyme is formed, which can initiate transcription.

The enzyme catalyses RNA(n) + a ribonucleoside 5'-triphosphate = RNA(n+1) + diphosphate. In terms of biological role, DNA-dependent RNA polymerase catalyzes the transcription of DNA into RNA using the four ribonucleoside triphosphates as substrates. The sequence is that of DNA-directed RNA polymerase subunit alpha from Paraburkholderia phytofirmans (strain DSM 17436 / LMG 22146 / PsJN) (Burkholderia phytofirmans).